Consider the following 458-residue polypeptide: Transmembrane protein 143 (458 aa).

The next 2 helical transmembrane spans lie at 277 to 297 and 298 to 318; these read LLNL…GMVI and LSDL…FMGV. Ser329 bears the Phosphoserine mark.

The protein resides in the membrane. In Mus musculus (Mouse), this protein is Transmembrane protein 143 (Tmem143).